The sequence spans 396 residues: Ornithine aminotransferase (396 aa).

Lys255 bears the N6-(pyridoxal phosphate)lysine mark.

The protein belongs to the class-III pyridoxal-phosphate-dependent aminotransferase family. OAT subfamily. Pyridoxal 5'-phosphate is required as a cofactor.

It is found in the cytoplasm. It carries out the reaction a 2-oxocarboxylate + L-ornithine = L-glutamate 5-semialdehyde + an L-alpha-amino acid. It functions in the pathway amino-acid biosynthesis; L-proline biosynthesis; L-glutamate 5-semialdehyde from L-ornithine: step 1/1. In terms of biological role, catalyzes the interconversion of ornithine to glutamate semialdehyde. This chain is Ornithine aminotransferase, found in Staphylococcus carnosus (strain TM300).